The sequence spans 342 residues: DNA-directed RNA polymerase subunit alpha (342 aa).

Residues 1–238 are alpha N-terminal domain (alpha-NTD); the sequence is MESLNVNAKN…DQLNMFVNFD (238 aa). Residues 254-342 form an alpha C-terminal domain (alpha-CTD) region; the sequence is FNKNLLRKVD…EMSKKLEEQI (89 aa).

Belongs to the RNA polymerase alpha chain family. Homodimer. The RNAP catalytic core consists of 2 alpha, 1 beta, 1 beta' and 1 omega subunit. When a sigma factor is associated with the core the holoenzyme is formed, which can initiate transcription.

The catalysed reaction is RNA(n) + a ribonucleoside 5'-triphosphate = RNA(n+1) + diphosphate. Its function is as follows. DNA-dependent RNA polymerase catalyzes the transcription of DNA into RNA using the four ribonucleoside triphosphates as substrates. In Pelagibacter ubique (strain HTCC1062), this protein is DNA-directed RNA polymerase subunit alpha.